We begin with the raw amino-acid sequence, 134 residues long: ATP synthase epsilon chain, chloroplastic (134 aa).

The protein belongs to the ATPase epsilon chain family. F-type ATPases have 2 components, CF(1) - the catalytic core - and CF(0) - the membrane proton channel. CF(1) has five subunits: alpha(3), beta(3), gamma(1), delta(1), epsilon(1). CF(0) has three main subunits: a, b and c.

It is found in the plastid. Its subcellular location is the chloroplast thylakoid membrane. In terms of biological role, produces ATP from ADP in the presence of a proton gradient across the membrane. This is ATP synthase epsilon chain, chloroplastic from Liriodendron tulipifera (Tuliptree).